The primary structure comprises 427 residues: Enolase (427 aa).

Q163 is a (2R)-2-phosphoglycerate binding site. The active-site Proton donor is the E205. 3 residues coordinate Mg(2+): D242, E285, and D312. Positions 337, 366, 367, and 388 each coordinate (2R)-2-phosphoglycerate. The active-site Proton acceptor is the K337.

The protein belongs to the enolase family. The cofactor is Mg(2+).

Its subcellular location is the cytoplasm. It localises to the secreted. The protein localises to the cell surface. It catalyses the reaction (2R)-2-phosphoglycerate = phosphoenolpyruvate + H2O. It participates in carbohydrate degradation; glycolysis; pyruvate from D-glyceraldehyde 3-phosphate: step 4/5. In terms of biological role, catalyzes the reversible conversion of 2-phosphoglycerate (2-PG) into phosphoenolpyruvate (PEP). It is essential for the degradation of carbohydrates via glycolysis. This chain is Enolase, found in Ralstonia nicotianae (strain ATCC BAA-1114 / GMI1000) (Ralstonia solanacearum).